A 426-amino-acid chain; its full sequence is Histone deacetylase 9 (426 aa).

Residues 6-318 (KISYFYDGDV…WTVETGILLD (313 aa)) are histone deacetylase. H137 serves as the catalytic Proton donor/acceptor. Residues D172, H174, and D261 each contribute to the Zn(2+) site. The disordered stretch occupies residues 383 to 426 (PDFYIPDFDEDEQNPDVRADQRSRDKQIQRDDEYFDGDNDNDAS). The span at 397 to 414 (PDVRADQRSRDKQIQRDD) shows a compositional bias: basic and acidic residues. Residues 415-426 (EYFDGDNDNDAS) are compositionally biased toward acidic residues.

The protein belongs to the histone deacetylase family. HD type 1 subfamily. As to quaternary structure, interacts with AHL22. Binds to farnesylated ASG2 in the cytosol. The cofactor is Zn(2+).

It is found in the nucleus. The protein localises to the cytoplasm. It localises to the cytosol. It carries out the reaction N(6)-acetyl-L-lysyl-[histone] + H2O = L-lysyl-[histone] + acetate. Its function is as follows. Responsible for the deacetylation of lysine residues on the N-terminal part of the core histones (H2A, H2B, H3 and H4). Histone deacetylation gives a tag for epigenetic repression and plays an important role in transcriptional regulation, cell cycle progression and developmental events. Histone deacetylases act via the formation of large multiprotein complexes. This chain is Histone deacetylase 9 (HDA9), found in Arabidopsis thaliana (Mouse-ear cress).